The chain runs to 155 residues: Regulatory protein RecX (155 aa).

The protein belongs to the RecX family.

Its subcellular location is the cytoplasm. Its function is as follows. Modulates RecA activity. The chain is Regulatory protein RecX from Pseudomonas entomophila (strain L48).